The sequence spans 151 residues: MTENLTRAFKELLNQERFGSQSEIVDALKKQGFTGINQSKISRMLSKFGAVRTRNTKMEMVYCLPNELSVPNTSSPLKNLVLDVDHNAMLIVIKTTPGAAQLIARLLDSIGKSEGILGTIAGDDTIFVTPTNNKPIDELLQNIQRLFENTL.

The protein belongs to the ArgR family. Homohexamer.

It is found in the cytoplasm. It participates in amino-acid biosynthesis; L-arginine biosynthesis [regulation]. Regulates arginine biosynthesis genes. The sequence is that of Arginine repressor (argR) from Haemophilus influenzae (strain ATCC 51907 / DSM 11121 / KW20 / Rd).